The sequence spans 629 residues: tRNA uridine 5-carboxymethylaminomethyl modification enzyme MnmG (629 aa).

FAD contacts are provided by residues G15–G20, V127, and S182. The segment at T203–P226 is disordered. The segment covering S215–P226 has biased composition (basic and acidic residues). G274–F288 is a binding site for NAD(+). FAD is bound at residue Q371.

Belongs to the MnmG family. Homodimer. Heterotetramer of two MnmE and two MnmG subunits. FAD is required as a cofactor.

Its subcellular location is the cytoplasm. Functionally, NAD-binding protein involved in the addition of a carboxymethylaminomethyl (cmnm) group at the wobble position (U34) of certain tRNAs, forming tRNA-cmnm(5)s(2)U34. This is tRNA uridine 5-carboxymethylaminomethyl modification enzyme MnmG from Listeria monocytogenes serovar 1/2a (strain ATCC BAA-679 / EGD-e).